Consider the following 599-residue polypeptide: Interleukin-18 receptor accessory protein (599 aa).

An N-terminal signal peptide occupies residues 1 to 19; the sequence is MLCLGWIFLWLVAGERIKG. Over 20-356 the chain is Extracellular; sequence FNISGCSTKK…TQSVQLKEKR (337 aa). Asn-21, Asn-119, and Asn-152 each carry an N-linked (GlcNAc...) asparagine glycan. Cysteines 46 and 126 form a disulfide. Ig-like C2-type domains are found at residues 149–235 and 251–353; these read PQTN…WTVR and PDIL…VQLK. Disulfide bonds link Cys-155–Cys-180, Cys-175–Cys-221, Cys-180–Cys-221, and Cys-273–Cys-337. N-linked (GlcNAc...) asparagine glycosylation occurs at Asn-345. Residues 357–377 traverse the membrane as a helical segment; sequence GVVLLYILLGTIGTLVAVLAA. Residues 378-599 are Cytoplasmic-facing; it reads SALLYRHWIE…TGRSSQPKEW (222 aa). The TIR domain maps to 406–559; it reads KDFDAFVSYA…RFWAKMRYHM (154 aa). Residue Glu-493 is part of the active site.

This sequence belongs to the interleukin-1 receptor family. As to quaternary structure, forms a ternary complex with IL18 and IL18R1. Within this complex, IL18R1 is involved in ligand-binding and IL18RAP in signaling leading to NF-kappa-B and JNK activation. N-glycosylated. In terms of tissue distribution, detected in adrenal gland, bone marrow, brain, fetal brain, fetal liver, heart, kidney, lung, liver, peripheral blood leukocytes, placenta, prostate, salivary gland, skeletal muscle, spinal cord, testis, thymus, thyroid, trachea and uterus. Strongly expressed in peripheral blood leukocytes and spleen and, to a lesser extent, in colon. Specifically coexpressed with IL18R1 in T-helper 1 (Th1)cells.

The protein localises to the cell membrane. The catalysed reaction is NAD(+) + H2O = ADP-D-ribose + nicotinamide + H(+). Its function is as follows. Within the IL18 receptor complex, does not mediate IL18-binding, but involved in IL18-dependent signal transduction, leading to NF-kappa-B and JNK activation. May play a role in IL18-mediated IFNG synthesis from T-helper 1 (Th1) cells. This chain is Interleukin-18 receptor accessory protein, found in Homo sapiens (Human).